Consider the following 50-residue polypeptide: AAAQHLCGSHLVDALYLVCGEKGFFYNPKGIVEQCCHKPCNIFDLQNYCN.

3 disulfides stabilise this stretch: Cys7/Cys36, Cys19/Cys49, and Cys35/Cys40.

The protein belongs to the insulin family. Heterodimer of a B chain and an A chain linked by two disulfide bonds.

The protein localises to the secreted. Functionally, insulin decreases blood glucose concentration. It increases cell permeability to monosaccharides, amino acids and fatty acids. It accelerates glycolysis, the pentose phosphate cycle, and glycogen synthesis in liver. The sequence is that of Insulin (ins) from Oncorhynchus gorbuscha (Pink salmon).